We begin with the raw amino-acid sequence, 251 residues long: Bidirectional sugar transporter SWEET4 (251 aa).

The Extracellular portion of the chain corresponds to 1 to 12 (MVNATVARNIAG). N-linked (GlcNAc...) asparagine glycosylation occurs at N3. One can recognise a MtN3/slv 1 domain in the interval 12–96 (GICGNVISLF…LAIFFFFSPT (85 aa)). Residues 13-33 (ICGNVISLFLFLSPIPTFITI) traverse the membrane as a helical segment. The Cytoplasmic segment spans residues 34–45 (YKKKKVEEYKAD). A helical transmembrane segment spans residues 46 to 66 (PYLATVLNCALWVFYGLPMVQ). Topologically, residues 67–72 (PDSLLV) are extracellular. The helical transmembrane segment at 73–93 (ITINGTGLAIELVYLAIFFFF) threads the bilayer. At 94 to 103 (SPTSRKVKVG) the chain is on the cytoplasmic side. Residues 104–124 (LWLIGEMVFVGIVATCTLLLF) form a helical membrane-spanning segment. The Extracellular segment spans residues 125–132 (HTHNQRSS). A helical membrane pass occupies residues 133–153 (FVGIFCVIFVSLMYIAPLTIM). The MtN3/slv 2 domain maps to 133–216 (FVGIFCVIFV…LILYACYYKT (84 aa)). The Cytoplasmic segment spans residues 154–163 (SKVIKTKSVK). A helical transmembrane segment spans residues 164–186 (YMPFSLSLANFLNGVVWVIYALI). Topologically, residues 187–190 (KFDL) are extracellular. Residues 191–213 (FILIGNGLGTVSGAVQLILYACY) traverse the membrane as a helical segment. The Cytoplasmic portion of the chain corresponds to 214–251 (YKTTPKDDEDEEDEENLSKVNSQLQLSGNSGQAKRVSA). The interval 220 to 251 (DDEDEEDEENLSKVNSQLQLSGNSGQAKRVSA) is disordered. Residues 231 to 245 (SKVNSQLQLSGNSGQ) show a composition bias toward polar residues.

It belongs to the SWEET sugar transporter family. Forms homooligomers and heterooligomers with SWEET8 and SWEET17.

The protein resides in the cell membrane. Its function is as follows. Mediates both low-affinity uptake and efflux of sugar across the plasma membrane. This chain is Bidirectional sugar transporter SWEET4, found in Arabidopsis thaliana (Mouse-ear cress).